The chain runs to 753 residues: 5-methyltetrahydropteroyltriglutamate--homocysteine methyltransferase (753 aa).

Residues 19–22 (RELK) and Arg-113 contribute to the 5-methyltetrahydropteroyltri-L-glutamate site. Residues 430-432 (IGS) and Glu-483 contribute to the L-homocysteine site. Residues 430 to 432 (IGS) and Glu-483 each bind L-methionine. Residues 514 to 515 (RC) and Trp-560 contribute to the 5-methyltetrahydropteroyltri-L-glutamate site. L-homocysteine is bound at residue Asp-598. An L-methionine-binding site is contributed by Asp-598. Glu-604 lines the 5-methyltetrahydropteroyltri-L-glutamate pocket. Positions 640, 642, and 664 each coordinate Zn(2+). His-693 acts as the Proton donor in catalysis. Zn(2+) is bound at residue Cys-725.

The protein belongs to the vitamin-B12 independent methionine synthase family. Requires Zn(2+) as cofactor.

The catalysed reaction is 5-methyltetrahydropteroyltri-L-glutamate + L-homocysteine = tetrahydropteroyltri-L-glutamate + L-methionine. The protein operates within amino-acid biosynthesis; L-methionine biosynthesis via de novo pathway; L-methionine from L-homocysteine (MetE route): step 1/1. In terms of biological role, catalyzes the transfer of a methyl group from 5-methyltetrahydrofolate to homocysteine resulting in methionine formation. The sequence is that of 5-methyltetrahydropteroyltriglutamate--homocysteine methyltransferase from Rhodococcus jostii (strain RHA1).